A 198-amino-acid polypeptide reads, in one-letter code: Beta-crystallin A1-2 (198 aa).

The segment at 1–13 (MAQINPLPVPLGP) is N-terminal arm. Beta/gamma crystallin 'Greek key' domains lie at 14 to 53 (WKITVYDQENFQGKRMEFTSSCANIMECGFDNIRSLKVEC) and 54 to 100 (GAWI…RPIC). The connecting peptide stretch occupies residues 101-106 (SANHIE). Beta/gamma crystallin 'Greek key' domains are found at residues 107-148 (SKLV…KVQC) and 149-197 (GAWV…RRIQ).

Belongs to the beta/gamma-crystallin family. In terms of assembly, homo/heterodimer, or complexes of higher-order. The structure of beta-crystallin oligomers seems to be stabilized through interactions between the N-terminal arms. Post-translationally, the N-terminus is blocked.

In terms of biological role, crystallins are the dominant structural components of the vertebrate eye lens. In Aquarana catesbeiana (American bullfrog), this protein is Beta-crystallin A1-2.